The chain runs to 1102 residues: Centrosomal protein of 128 kDa (1102 aa).

Residues S31, S248, and S290 each carry the phosphoserine modification. Coiled coils occupy residues 215–822 (VSDR…LETE) and 878–959 (EELK…ALQM). A disordered region spans residues 326 to 346 (QHQVPCISKQPLSHQDDQGDD). 2 disordered regions span residues 991–1048 (SEKT…DHSR) and 1070–1102 (DPAS…KYKK). Residues 1009 to 1027 (QQRRDDTKPRIKSFRDDRP) show a composition bias toward basic and acidic residues. 2 stretches are compositionally biased toward polar residues: residues 1039–1048 (HSSSCQDHSR) and 1076–1089 (GDTT…TSPQ). Residues 1090–1102 (SKKEEHEIKKYKK) show a composition bias toward basic and acidic residues.

The protein resides in the cytoplasm. The protein localises to the cytoskeleton. It localises to the microtubule organizing center. Its subcellular location is the centrosome. It is found in the centriole. The protein resides in the spindle pole. The chain is Centrosomal protein of 128 kDa (Cep128) from Mus musculus (Mouse).